The following is a 603-amino-acid chain: NADH-ubiquinone oxidoreductase chain 5 (603 aa).

Transmembrane regions (helical) follow at residues 4–24 (FTTM…ATLI), 38–58 (TAIA…ICLG), 89–109 (FLPV…WYMA), 122–142 (LIFL…QLFI), 171–191 (AILY…WFLL), 211–233 (LPLL…HPWL), 241–261 (TPVS…FLLI), 273–293 (IQTL…ICAL), 301–320 (IVAF…IGIN), 325–347 (AFLH…GSII), 366–386 (MPLT…MPFL), 405–424 (NAWA…AYST), 457–477 (LMTG…PTSL), 488–508 (LAAL…NYLA), 537–557 (IPHL…DLTW), and 582–602 (GMIK…LLMI).

This sequence belongs to the complex I subunit 5 family. Core subunit of respiratory chain NADH dehydrogenase (Complex I) which is composed of 45 different subunits.

The protein resides in the mitochondrion inner membrane. It catalyses the reaction a ubiquinone + NADH + 5 H(+)(in) = a ubiquinol + NAD(+) + 4 H(+)(out). Core subunit of the mitochondrial membrane respiratory chain NADH dehydrogenase (Complex I) which catalyzes electron transfer from NADH through the respiratory chain, using ubiquinone as an electron acceptor. Essential for the catalytic activity and assembly of complex I. This is NADH-ubiquinone oxidoreductase chain 5 (MT-ND5) from Pongo pygmaeus (Bornean orangutan).